The following is a 1151-amino-acid chain: MSFSQLEQNIKKKIAVEENIIRGASALKKKTSNVMVIQKCNTNIREARQNLEYLEDSLKKLRLKTAQQSQGENGSEDNERCNSKEYGFLSTKSPNEHIFSRLDLVKYDCPSLAQRIQYMLQQLEFKLQVEKQYQEANTKLTKLYQIDGDQRSSSAAEGGAMESKYRIQMLNKALKKYQAINVDFDQFKHQPNDIMDNQQPKFRRKQLTGVLTIGITAARDVDHIQSPMFARKPESYVTIKIDDTIKARTKPSRNDRWSEDFQIPVEKGNEIEITVYDKVNDSLIPVAIMWLLLSDIAEEIRKKKAGQTNEQQGWVNASNINGGSSLASEEGSTLTSTYSNSAIQSTSAKNVQGENTSTSQISTNSWFVLEPSGQILLTLGFHKSSQIERKQLMGGLHRHGAIINRKEEIFEQHGHHFVQKSFYNIMCCAYCGDFLRYTGFQCQDCKFLCHKKCYTNVVTKCIAKTSTDTDPDEAKLNHRIPHRFLPTSNRGTKWCCHCGYILPWGRHKVRKCSECGIMCHAQCAHLVPDFCGMSMEMANKILKTIQDTKRNQEKKKRTVPSAQLGSSIGTANGSDLSPSKLAERANAPLPPQPRKHDKTPSPQKVGRDSPTKQHDPIIDKRISLQTHGREKLNKFIDENEAYLNFTEGAQQTAEFSSPEKTLDPTSNRRSLGLTDLSIEHSQTWESKDDLMRDELELWKAQREEMELEIKQDSGEIQEDLEVDHIDLETKQKLDWENKNDFREADLTIDSTHTNPFRDMNSETFQIEQDHASKEVLQETVSLAPTSTHASRTTDQQSPQKSQTSTSAKHKKRAAKRRKVSLDNFVLLKVLGKGNFGKVILSKSKNTDRLCAIKVLKKDNIIQNHDIESARAEKKVFLLATKTKHPFLTNLYCSFQTENRIYFAMEFIGGGDLMWHVQNQRLSVRRAKFYAAEVLLALKYFHDNGVIYRDLKLENILLTPEGHIKIADYGLCKDEMWYGNRTSTFCGTPEFMAPEILKEQEYTKAVDWWAFGVLLYQMLLCQSPFSGDDEDEVFNAILTDEPLYPIDMAGEIVQIFQGLLTKDPEKRLGAGPRDADEVMEEPFFRNINFDDILNLRVKPPYIPEIKSPEDTSYFEQEFTSAPPTLTPLPSVLTTSQQEEFRGFSFMPDDLDL.

2 consecutive REM-1 domains span residues 1-67 (MSFS…KTAQ) and 106-183 (KYDC…INVD). Residues 64-88 (KTAQQSQGENGSEDNERCNSKEYGF) are disordered. One can recognise a C2 domain in the interval 190-309 (QPNDIMDNQQ…IRKKKAGQTN (120 aa)). The residue at position 226 (Ser226) is a Phosphoserine. The tract at residues 306–331 (GQTNEQQGWVNASNINGGSSLASEEG) is disordered. 2 Phorbol-ester/DAG-type zinc fingers span residues 414–461 (GHHF…VTKC) and 481–531 (PHRF…PDFC). Disordered regions lie at residues 546–620 (QDTK…IIDK) and 649–669 (AQQT…SNRR). The segment covering 560-577 (PSAQLGSSIGTANGSDLS) has biased composition (polar residues). Residues 605-620 (VGRDSPTKQHDPIIDK) show a composition bias toward basic and acidic residues. A Phosphoserine modification is found at Ser761. A disordered region spans residues 782 to 816 (LAPTSTHASRTTDQQSPQKSQTSTSAKHKKRAAKR). Residues 792-806 (TTDQQSPQKSQTSTS) are compositionally biased toward low complexity. Residues 807–816 (AKHKKRAAKR) show a composition bias toward basic residues. The region spanning 824 to 1083 (FVLLKVLGKG…ADEVMEEPFF (260 aa)) is the Protein kinase domain. Residues 830-838 (LGKGNFGKV) and Lys853 each bind ATP. Residue Asp949 is the Proton acceptor of the active site. One can recognise an AGC-kinase C-terminal domain in the interval 1084–1151 (RNINFDDILN…FSFMPDDLDL (68 aa)).

Belongs to the protein kinase superfamily. AGC Ser/Thr protein kinase family. PKC subfamily.

It carries out the reaction L-seryl-[protein] + ATP = O-phospho-L-seryl-[protein] + ADP + H(+). The enzyme catalyses L-threonyl-[protein] + ATP = O-phospho-L-threonyl-[protein] + ADP + H(+). Functionally, required for cell growth and for the G2-&gt;M transition of the cell division cycle. Mediates a protein kinase cascade; it activates BCK1 which itself activates MKK1/MKK2. The protein is Protein kinase C-like 1 (PKC1) of Saccharomyces cerevisiae (strain ATCC 204508 / S288c) (Baker's yeast).